An 825-amino-acid chain; its full sequence is Osmosensitive cation channel TMEM63C (825 aa).

The Extracellular segment spans residues 1–50 (MAFESWPAGGVRPVEELDVRSFLMEENSTAERCYRSHSRSSVLQGLPFGG). Residues 51–75 (VPTVLAINVVLWLILLLIFSCLRKA) form a helical membrane-spanning segment. The Cytoplasmic portion of the chain corresponds to 76–141 (AWDYGRLALL…KDEEIRSKCG (66 aa)). Residues 98–117 (EQSEKEKTPSDSSPSDSETK) are disordered. Residues 142-174 (IDAVTYLSFQRHIILLMMVVCLLSLTIILPVNL) traverse the membrane as a helical segment. The Extracellular portion of the chain corresponds to 175-198 (SGNLLGDNPENFGRTTVVNVPAQN). Residues 199–223 (IFLWLHSIFALLYFVITVLCMAHHS) traverse the membrane as a helical segment. At 224–418 (SRLEYREDEK…IIWENLSVCG (195 aa)) the chain is on the cytoplasmic side. Residues 419-448 (PRWWLRCILLNILLFLLLFFLTTPAIIVNT) form a helical membrane-spanning segment. Residues 449-463 (MDKFNVTRPVESLRN) are Extracellular-facing. The helical transmembrane segment at 464–493 (PVITQFFPTLLLWAFSILLPFIVYYSSFFE) threads the bilayer. Over 494 to 497 (YHWT) the chain is Cytoplasmic. The helical transmembrane segment at 498–534 (RSGENQVTMHKCFLLLVFMVIILPSLGLSSLNLFFRW) threads the bilayer. Residues 535–557 (LFDVRFLDETDVKFQCVFLPDNG) lie on the Extracellular side of the membrane. A helical membrane pass occupies residues 558 to 590 (AFFVNYVITSSLIGTAMELLRIPALLVYSLRLC). Topologically, residues 591-610 (FAKSKAECIHVKISQAYEFQ) are cytoplasmic. A helical transmembrane segment spans residues 611-629 (FGLEYAWTMCIFSVSMTYS). Residues 630-632 (ITC) lie on the Extracellular side of the membrane. A helical transmembrane segment spans residues 633–657 (PVIVPFGLLYLVLKHMVDRYNIYYA). The Cytoplasmic segment spans residues 658–664 (YTPTKLN). The chain crosses the membrane as a helical span at residues 665–693 (QRIHAAAISQVVVAPILCMFWLLFFSVLR). At 694–698 (LGPVQ) the chain is on the extracellular side. The chain crosses the membrane as a helical span at residues 699–719 (PITLFTFITLLCSIAFSCFGF). Residues 720–825 (CMKKLRADRS…LLMDSPVAFQ (106 aa)) are Cytoplasmic-facing. A disordered region spans residues 777–825 (SPAHQSYGTMVNSQSSVRDAEEDEEKDLEETLETELKDDLLMDSPVAFQ). The segment covering 779-793 (AHQSYGTMVNSQSSV) has biased composition (polar residues). Acidic residues predominate over residues 796–809 (AEEDEEKDLEETLE).

Belongs to the CSC1 (TC 1.A.17) family. As to quaternary structure, monomer.

Its subcellular location is the endoplasmic reticulum membrane. It is found in the cell membrane. It catalyses the reaction Ca(2+)(in) = Ca(2+)(out). Functionally, acts as an osmosensitive cation channel preferentially activated upon hypotonic stress. In contrast to tmem63b, does not show phospholipid scramblase activity. Required for the functional integrity of the kidney glomerular filtration barrier. The polypeptide is Osmosensitive cation channel TMEM63C (tmem63c) (Danio rerio (Zebrafish)).